A 338-amino-acid chain; its full sequence is MKVYYDKDCDLSIIQGKKVAIIGYGSQGHAQACNLKDSGVDVTIGLRKGSATVAKAEAHGLKVTDVASAVAAADLVMILTPDEFQGQLYKNEIEPNIKKGATLAFSHGFAIHYNQVVPRADLDVIMIAPKAPGHTVRTEFVKGGGIPDLIAVYQDASGNAKNVALSYASGVGGGRTGIIETTFKDETETDLFGEQAVLCGGTVELVKAGFETLVEAGYAPEMAYFECLHELKLIVDLMYEGGIANMNYSISNNAEYGEYVTGPEVINAESRQAMRNALKRIQDGEYAKMFISEGATGYPSMTAKRRNNAAHGIEVIGEQLRAMMPWIAANKIVDKTKN.

The KARI N-terminal Rossmann domain maps to 1 to 181 (MKVYYDKDCD…GGGRTGIIET (181 aa)). Residues 24-27 (YGSQ), Arg47, Ser50, Thr52, and 82-85 (DEFQ) each bind NADP(+). His107 is an active-site residue. Gly133 is an NADP(+) binding site. The KARI C-terminal knotted domain occupies 182–327 (TFKDETETDL…EQLRAMMPWI (146 aa)). Residues Asp190, Glu194, Glu226, and Glu230 each coordinate Mg(2+). Position 251 (Ser251) interacts with substrate.

This sequence belongs to the ketol-acid reductoisomerase family. Mg(2+) is required as a cofactor.

The enzyme catalyses (2R)-2,3-dihydroxy-3-methylbutanoate + NADP(+) = (2S)-2-acetolactate + NADPH + H(+). It catalyses the reaction (2R,3R)-2,3-dihydroxy-3-methylpentanoate + NADP(+) = (S)-2-ethyl-2-hydroxy-3-oxobutanoate + NADPH + H(+). The protein operates within amino-acid biosynthesis; L-isoleucine biosynthesis; L-isoleucine from 2-oxobutanoate: step 2/4. Its pathway is amino-acid biosynthesis; L-valine biosynthesis; L-valine from pyruvate: step 2/4. In terms of biological role, involved in the biosynthesis of branched-chain amino acids (BCAA). Catalyzes an alkyl-migration followed by a ketol-acid reduction of (S)-2-acetolactate (S2AL) to yield (R)-2,3-dihydroxy-isovalerate. In the isomerase reaction, S2AL is rearranged via a Mg-dependent methyl migration to produce 3-hydroxy-3-methyl-2-ketobutyrate (HMKB). In the reductase reaction, this 2-ketoacid undergoes a metal-dependent reduction by NADPH to yield (R)-2,3-dihydroxy-isovalerate. This is Ketol-acid reductoisomerase (NADP(+)) from Ectopseudomonas mendocina (strain ymp) (Pseudomonas mendocina).